Reading from the N-terminus, the 207-residue chain is Antitermination protein Q (207 aa).

Residues methionine 1–serine 28 form a disordered region. Zn(2+) is bound by residues cysteine 118, cysteine 121, cysteine 144, and cysteine 147. A zinc finger lies at cysteine 118–cysteine 147. The DNA-binding element occupies leucine 171–histidine 192.

It belongs to the phage antitermination Q type 2 family. In terms of assembly, interacts with host RPOB (via flap domain); this interaction renders host RNAP resistant to transcription pausing and allows it to read through termination signals. Interacts with host RNA polymerase sigma factor RPOD (via domain-4). Interacts with host NusA (via N-terminus and AR2 domain); this interaction releases the autoinhibition of NusA.

Functionally, mediates the switch from middle to viral late gene expression by associating with host RNA polymerase (RNAP) so that the latter can read without pausing and through transcription terminators preceding late genes. Competes with host factor sigma 70 for binding to RPOB, the beta-subunit of host RNAP. To join the elongation complex, binds a specific DNA Q-binding element (QBE) and interacts with RNAP that is paused during early elongation. Participates in the lysis-lysogeny decision by activating the expression of the late lytic genes. The protein is Antitermination protein Q (23) of Salmonella typhimurium.